The primary structure comprises 566 residues: Arginine--tRNA ligase (566 aa).

The short motif at 129–139 (ANPTGPLHIGH) is the 'HIGH' region element.

The protein belongs to the class-I aminoacyl-tRNA synthetase family. In terms of assembly, monomer.

It is found in the cytoplasm. It carries out the reaction tRNA(Arg) + L-arginine + ATP = L-arginyl-tRNA(Arg) + AMP + diphosphate. In Wolbachia pipientis subsp. Culex pipiens (strain wPip), this protein is Arginine--tRNA ligase.